A 625-amino-acid polypeptide reads, in one-letter code: tRNA uridine 5-carboxymethylaminomethyl modification enzyme MnmG (625 aa).

FAD-binding positions include 11–16, V123, and S178; that span reads GAGHAG. An NAD(+)-binding site is contributed by 271-285; it reads GPRYCPSIETKIVTF. Residue Q368 coordinates FAD.

Belongs to the MnmG family. As to quaternary structure, homodimer. Heterotetramer of two MnmE and two MnmG subunits. FAD serves as cofactor.

It localises to the cytoplasm. In terms of biological role, NAD-binding protein involved in the addition of a carboxymethylaminomethyl (cmnm) group at the wobble position (U34) of certain tRNAs, forming tRNA-cmnm(5)s(2)U34. The polypeptide is tRNA uridine 5-carboxymethylaminomethyl modification enzyme MnmG (Bacteroides fragilis (strain YCH46)).